The following is a 381-amino-acid chain: Putative acetyl-CoA C-acetyltransferase VraB (381 aa).

Cys86 (acyl-thioester intermediate) is an active-site residue. His338 serves as the catalytic Proton acceptor.

Belongs to the thiolase-like superfamily. Thiolase family.

In Staphylococcus haemolyticus (strain JCSC1435), this protein is Putative acetyl-CoA C-acetyltransferase VraB (vraB).